The chain runs to 640 residues: 1-deoxy-D-xylulose-5-phosphate synthase (640 aa).

Thiamine diphosphate-binding positions include H79 and 120-122 (AHS). D151 is a Mg(2+) binding site. Residues 152–153 (GA), N180, Y289, and E371 contribute to the thiamine diphosphate site. Residue N180 participates in Mg(2+) binding.

Belongs to the transketolase family. DXPS subfamily. In terms of assembly, homodimer. Requires Mg(2+) as cofactor. Thiamine diphosphate is required as a cofactor.

The enzyme catalyses D-glyceraldehyde 3-phosphate + pyruvate + H(+) = 1-deoxy-D-xylulose 5-phosphate + CO2. The protein operates within metabolic intermediate biosynthesis; 1-deoxy-D-xylulose 5-phosphate biosynthesis; 1-deoxy-D-xylulose 5-phosphate from D-glyceraldehyde 3-phosphate and pyruvate: step 1/1. Its function is as follows. Catalyzes the acyloin condensation reaction between C atoms 2 and 3 of pyruvate and glyceraldehyde 3-phosphate to yield 1-deoxy-D-xylulose-5-phosphate (DXP). The protein is 1-deoxy-D-xylulose-5-phosphate synthase of Novosphingobium aromaticivorans (strain ATCC 700278 / DSM 12444 / CCUG 56034 / CIP 105152 / NBRC 16084 / F199).